The sequence spans 115 residues: T cell receptor beta variable 11-3 (115 aa).

Residues 1–21 (MGTRLLCWVAFCLLVEELIEA) form the signal peptide. Residues 22 to 115 (GVVQSPRYKI…SAVYLCASSL (94 aa)) form the Ig-like domain. C42 and C111 form a disulfide bridge.

Alpha-beta TR is a heterodimer composed of an alpha and beta chain; disulfide-linked. The alpha-beta TR is associated with the transmembrane signaling CD3 coreceptor proteins to form the TR-CD3 (TcR or TCR). The assembly of alpha-beta TR heterodimers with CD3 occurs in the endoplasmic reticulum where a single alpha-beta TR heterodimer associates with one CD3D-CD3E heterodimer, one CD3G-CD3E heterodimer and one CD247 homodimer forming a stable octameric structure. CD3D-CD3E and CD3G-CD3E heterodimers preferentially associate with TR alpha and TR beta chains, respectively. The association of the CD247 homodimer is the last step of TcR assembly in the endoplasmic reticulum and is required for transport to the cell surface.

Its subcellular location is the cell membrane. Its function is as follows. V region of the variable domain of T cell receptor (TR) beta chain that participates in the antigen recognition. Alpha-beta T cell receptors are antigen specific receptors which are essential to the immune response and are present on the cell surface of T lymphocytes. Recognize peptide-major histocompatibility (MH) (pMH) complexes that are displayed by antigen presenting cells (APC), a prerequisite for efficient T cell adaptive immunity against pathogens. Binding of alpha-beta TR to pMH complex initiates TR-CD3 clustering on the cell surface and intracellular activation of LCK that phosphorylates the ITAM motifs of CD3G, CD3D, CD3E and CD247 enabling the recruitment of ZAP70. In turn ZAP70 phosphorylates LAT, which recruits numerous signaling molecules to form the LAT signalosome. The LAT signalosome propagates signal branching to three major signaling pathways, the calcium, the mitogen-activated protein kinase (MAPK) kinase and the nuclear factor NF-kappa-B (NF-kB) pathways, leading to the mobilization of transcription factors that are critical for gene expression and essential for T cell growth and differentiation. The T cell repertoire is generated in the thymus, by V-(D)-J rearrangement. This repertoire is then shaped by intrathymic selection events to generate a peripheral T cell pool of self-MH restricted, non-autoaggressive T cells. Post-thymic interaction of alpha-beta TR with the pMH complexes shapes TR structural and functional avidity. The chain is T cell receptor beta variable 11-3 from Homo sapiens (Human).